Here is a 391-residue protein sequence, read N- to C-terminus: Processive diacylglycerol beta-glucosyltransferase (391 aa).

Belongs to the glycosyltransferase 28 family. UgtP subfamily.

Its subcellular location is the cell membrane. It carries out the reaction a 1,2-diacyl-3-O-(beta-D-glucopyranosyl)-sn-glycerol + UDP-alpha-D-glucose = a 1,2-diacyl-3-O-(beta-D-Glc-(1-&gt;6)-beta-D-Glc)-sn-glycerol + UDP + H(+). The enzyme catalyses a 1,2-diacyl-sn-glycerol + UDP-alpha-D-glucose = a 1,2-diacyl-3-O-(beta-D-glucopyranosyl)-sn-glycerol + UDP + H(+). Its pathway is glycolipid metabolism; diglucosyl-diacylglycerol biosynthesis. Functionally, processive glucosyltransferase involved in the biosynthesis of both the bilayer- and non-bilayer-forming membrane glucolipids. Is able to successively transfer two glucosyl residues to diacylglycerol (DAG), thereby catalyzing the formation of beta-monoglucosyl-DAG (3-O-(beta-D-glucopyranosyl)-1,2-diacyl-sn-glycerol) and beta-diglucosyl-DAG (3-O-(beta-D-glucopyranosyl-beta-(1-&gt;6)-D-glucopyranosyl)-1,2-diacyl-sn-glycerol). Beta-diglucosyl-DAG is the predominant glycolipid found in Bacillales and is also used as a membrane anchor for lipoteichoic acid (LTA). This chain is Processive diacylglycerol beta-glucosyltransferase, found in Staphylococcus haemolyticus (strain JCSC1435).